The sequence spans 89 residues: Small ribosomal subunit protein uS15 (89 aa).

The protein belongs to the universal ribosomal protein uS15 family. Part of the 30S ribosomal subunit. Forms a bridge to the 50S subunit in the 70S ribosome, contacting the 23S rRNA.

Functionally, one of the primary rRNA binding proteins, it binds directly to 16S rRNA where it helps nucleate assembly of the platform of the 30S subunit by binding and bridging several RNA helices of the 16S rRNA. In terms of biological role, forms an intersubunit bridge (bridge B4) with the 23S rRNA of the 50S subunit in the ribosome. This Paraburkholderia phymatum (strain DSM 17167 / CIP 108236 / LMG 21445 / STM815) (Burkholderia phymatum) protein is Small ribosomal subunit protein uS15.